A 514-amino-acid polypeptide reads, in one-letter code: MKYRDLRDFLQQLELRGELKRIATPVSTHLEMTEIADRVLRAQGPALLFEHAVHNGARAAMPVLANLFGTPRRVAWGMGADEVSALRDTGELLASLREPEAPRGLRDALGKVAMLKSALWDMAPKRVRGPACQEIVWEGADVDLARLPIQTCWPGDVAPLLTWGLVITRGPNARRQNLGIYRQQPIAPNKLIMRWLSHRGGALDFREHARAHPGTPFPVAVALGADPATILGAVTPVPDSLSEYQFAGLLRGSRTEVGQALGSDLSVPAWAEIVLEGHLLPANDPRAVAPVVPEGAPPPPDTGYEMALEGPYGDHTGYYNEQDWFPVFTVDRITMRRDPVYHSTYTGKPPDEPAVLGVALNEVFVPLLRRQLPEIVDFYLPPEGCSYRLAVVSIRKQYAGHAKRVMFGLWSVLRQFMYTKFIVVVDDDIDPRNWNEVVWAITTRMDPVRDTVLVERTPIDYLDFASPVSGLGGKMGMDATNKWPGETDREWGRPIAMDDAVKQRVDAMWGELGL.

Asn177 contributes to the Mn(2+) binding site. Prenylated FMN contacts are provided by residues 180–182 (IYR), 194–196 (RWL), and 199–200 (RG). Glu243 lines the Mn(2+) pocket. Asp314 (proton donor) is an active-site residue.

Belongs to the UbiD family. As to quaternary structure, homohexamer. The cofactor is prenylated FMN. It depends on Mn(2+) as a cofactor.

The protein localises to the cell membrane. The catalysed reaction is a 4-hydroxy-3-(all-trans-polyprenyl)benzoate + H(+) = a 2-(all-trans-polyprenyl)phenol + CO2. It functions in the pathway cofactor biosynthesis; ubiquinone biosynthesis. In terms of biological role, catalyzes the decarboxylation of 3-octaprenyl-4-hydroxy benzoate to 2-octaprenylphenol, an intermediate step in ubiquinone biosynthesis. The protein is 3-octaprenyl-4-hydroxybenzoate carboxy-lyase of Bordetella petrii (strain ATCC BAA-461 / DSM 12804 / CCUG 43448).